Reading from the N-terminus, the 154-residue chain is Transcriptional repressor NrdR (154 aa).

Residues 3-34 (CPTCQYNGTRVVDSRPADDGNSIRRRRECEKC) fold into a zinc finger. Positions 49–139 (LIVVKKDGAR…VYRQFKDISV (91 aa)) constitute an ATP-cone domain.

This sequence belongs to the NrdR family. Zn(2+) serves as cofactor.

Its function is as follows. Negatively regulates transcription of bacterial ribonucleotide reductase nrd genes and operons by binding to NrdR-boxes. This is Transcriptional repressor NrdR from Listeria monocytogenes serotype 4a (strain HCC23).